The chain runs to 108 residues: Glutaredoxin-1 (108 aa).

Residues 3 to 106 (EEFVQQRLAN…DILSSIGVLR (104 aa)) enclose the Glutaredoxin domain. A disulfide bridge connects residues Cys23 and Cys26.

The protein belongs to the glutaredoxin family.

The protein resides in the virion. In terms of biological role, has thioltransferase and dehydroascorbate reductase activities. This is Glutaredoxin-1 (OPG075) from Camelpox virus (strain M-96).